The primary structure comprises 455 residues: GTPase Der (455 aa).

EngA-type G domains follow at residues 4-174 (PIVA…PAGQ) and 183-358 (LKIA…SERN). Residues 10 to 17 (GRPNVGKS), 57 to 61 (DTAGL), 126 to 129 (NKAD), 189 to 196 (GRPNVGKS), 236 to 240 (DTAGI), and 301 to 304 (NKWD) contribute to the GTP site. A KH-like domain is found at 359–444 (KRVSTSDINN…PIILVFKGRE (86 aa)).

This sequence belongs to the TRAFAC class TrmE-Era-EngA-EngB-Septin-like GTPase superfamily. EngA (Der) GTPase family. Associates with the 50S ribosomal subunit.

In terms of biological role, GTPase that plays an essential role in the late steps of ribosome biogenesis. The protein is GTPase Der of Herpetosiphon aurantiacus (strain ATCC 23779 / DSM 785 / 114-95).